The following is a 439-amino-acid chain: Kinesin-like protein KIN-13 (439 aa).

1 to 5 (GSGKS) is an ATP binding site. Residues 1-240 (GSGKSFTMMH…LRYADRVKEL (240 aa)) form the Kinesin motor domain.

It belongs to the TRAFAC class myosin-kinesin ATPase superfamily. Kinesin family. KIN-13 subfamily. Interacts with PLK. In terms of processing, phosphorylated by PLK.

The protein resides in the cytoplasm. It localises to the cytoskeleton. Its subcellular location is the cell projection. The protein localises to the cilium. It is found in the flagellum. The protein resides in the flagellum basal body. It localises to the flagellum axoneme. Its subcellular location is the spindle. The protein localises to the chromosome. It is found in the centromere. The protein resides in the kinetochore. In terms of biological role, involved in cell cycle. Involved in formation of flagella, regulation of flagellar length, and formation of median bodies during interphase. Regulates flagellar length in all eight distal flagellar tips by promoting disassembly of the microtubules. Disassembles microtubules at the distal flagellar tips in a length-dependent manner in order to maintain different equilibrium lengths of the four flagellar pairs. Regulates interphase and mitotic microtubule dynamics. Regulates microtubule disassembly dynamics of the dual mitotic spindles and the median body. This is Kinesin-like protein KIN-13 from Giardia intestinalis (Giardia lamblia).